Reading from the N-terminus, the 378-residue chain is Rhodopsin (378 aa).

Over 1–53 (MMSIASGPSHAAYTWASQGGGFGNQTVVDKVPPEMLHMVDAHWYQFPPMNPLW) the chain is Extracellular. An N-linked (GlcNAc...) asparagine glycan is attached at Asn-24. Residues 54-78 (HALLGFVIGVLGVISVIGNGMVIYI) form a helical membrane-spanning segment. Residues 79–90 (FTTTKSLRTPSN) are Cytoplasmic-facing. A helical membrane pass occupies residues 91–115 (LLVVNLAISDFLMMLCMSPAMVINC). Topologically, residues 116 to 130 (YYETWVLGPLFCELY) are extracellular. Cys-127 and Cys-204 form a disulfide bridge. Residues 131 to 150 (GLAGSLFGCASIWTMTMIAF) form a helical membrane-spanning segment. Over 151–169 (DRYNVIVKGLSAKPMTING) the chain is Cytoplasmic. Residues 170 to 193 (ALIRILTIWFFTLAWTIAPMFGWN) traverse the membrane as a helical segment. Residues 194–217 (RYVPEGNMTACGTDYLTKDLFSRS) lie on the Extracellular side of the membrane. Asn-200 carries N-linked (GlcNAc...) asparagine glycosylation. Residues 218–245 (YILIYSIFVYFTPLFLIIYSYFFIIQAV) form a helical membrane-spanning segment. The Cytoplasmic segment spans residues 246 to 280 (AAHEKNMREQAKKMNVASLRSAENQSTSAECKLAK). The helical transmembrane segment at 281–304 (VALMTISLWFMAWTPYLVINYSGI) threads the bilayer. Over 305-311 (FETTKIS) the chain is Extracellular. A helical membrane pass occupies residues 312–336 (PLFTIWGSLFAKANAVYNPIVYGIS). Lys-323 is subject to N6-(retinylidene)lysine. Residues 337–378 (HPKYRAALFQKFPSLACTTEPTGADTMSTTTTVTEGNEKPAA) lie on the Cytoplasmic side of the membrane.

Belongs to the G-protein coupled receptor 1 family. Opsin subfamily. Post-translationally, phosphorylated on some or all of the serine and threonine residues present in the C-terminal region.

It localises to the membrane. Visual pigments are the light-absorbing molecules that mediate vision. They consist of an apoprotein, opsin, covalently linked to cis-retinal. In Camponotus atriceps (Florida carpenter ant), this protein is Rhodopsin.